Consider the following 134-residue polypeptide: Holo-[acyl-carrier-protein] synthase (134 aa).

Mg(2+) is bound by residues Asp-8 and Glu-56.

The protein belongs to the P-Pant transferase superfamily. AcpS family. It depends on Mg(2+) as a cofactor.

It localises to the cytoplasm. The catalysed reaction is apo-[ACP] + CoA = holo-[ACP] + adenosine 3',5'-bisphosphate + H(+). Functionally, transfers the 4'-phosphopantetheine moiety from coenzyme A to a Ser of acyl-carrier-protein. This chain is Holo-[acyl-carrier-protein] synthase, found in Clostridium kluyveri (strain ATCC 8527 / DSM 555 / NBRC 12016 / NCIMB 10680 / K1).